A 299-amino-acid chain; its full sequence is Oxygen-dependent coproporphyrinogen-III oxidase (299 aa).

Residue Ser-92 participates in substrate binding. Positions 96 and 106 each coordinate Mn(2+). His-106 acts as the Proton donor in catalysis. 108–110 contributes to the substrate binding site; it reads NVR. His-145 and His-175 together coordinate Mn(2+). The important for dimerization stretch occupies residues 240–275; the sequence is YVEFNLVWDRGTLFGLQTGGRTESILMSMPPLVRWE. 258-260 contacts substrate; sequence GGR.

This sequence belongs to the aerobic coproporphyrinogen-III oxidase family. In terms of assembly, homodimer. Mn(2+) is required as a cofactor.

It is found in the cytoplasm. The catalysed reaction is coproporphyrinogen III + O2 + 2 H(+) = protoporphyrinogen IX + 2 CO2 + 2 H2O. It functions in the pathway porphyrin-containing compound metabolism; protoporphyrin-IX biosynthesis; protoporphyrinogen-IX from coproporphyrinogen-III (O2 route): step 1/1. Its function is as follows. Involved in the heme biosynthesis. Catalyzes the aerobic oxidative decarboxylation of propionate groups of rings A and B of coproporphyrinogen-III to yield the vinyl groups in protoporphyrinogen-IX. The polypeptide is Oxygen-dependent coproporphyrinogen-III oxidase (Escherichia coli O7:K1 (strain IAI39 / ExPEC)).